A 1041-amino-acid polypeptide reads, in one-letter code: RAS protein activator like-3 (1041 aa).

The tract at residues 1 to 59 (MKPECGQTMFRTFWSRSRDSSAMDPPLQSEEDSQTQPSLPSPLTSYRWHTGGSGEKAAG) is disordered. Residues 34-44 (QTQPSLPSPLT) show a composition bias toward polar residues. A phosphoserine mark is found at Ser-41, Ser-74, Ser-187, Ser-189, Ser-190, Ser-193, Ser-239, Ser-252, Ser-256, and Ser-259. Residues 218–243 (SNQVHNVRKLLKRLKEKKRAKSELGA) are a coiled coil. Positions 220 to 321 (QVHNVRKLLK…WIEDLRRQFQ (102 aa)) constitute a PH domain. The disordered stretch occupies residues 234–256 (KKRAKSELGAYTPRDGPPSALGS). The residue at position 262 (Thr-262) is a Phosphothreonine. The region spanning 312–430 (WIEDLRRQFQ…APAAGLERWF (119 aa)) is the C2 domain. The Ras-GAP domain occupies 500–708 (GRAQALVTDL…PAMQHFLDQV (209 aa)). Positions 790 to 910 (GEKPGFLAPR…PGDRYQTTGT (121 aa)) are disordered. A phosphoserine mark is found at Ser-813 and Ser-816. Residues 850 to 866 (RPTHRRPSAGSKPRPKG) are compositionally biased toward basic residues. The stretch at 931–1013 (QKALSLLVES…LRDSLQSLQL (83 aa)) forms a coiled coil. Residues 1016 to 1041 (KTPGSRSQPLPLKAPCVNGADLSMGT) form a disordered region.

As to expression, predominantly expressed in hematopoietic tissues.

It localises to the cytoplasm. Its subcellular location is the cell cortex. Functions as a Ras GTPase-activating protein. Plays an important role in the expansion and functions of natural killer T (NKT) cells in the liver by negatively regulating RAS activity and the down-stream ERK signaling pathway. This is RAS protein activator like-3 (Rasal3) from Mus musculus (Mouse).